The sequence spans 299 residues: Regucalcin (299 aa).

Glu-18 lines the a divalent metal cation pocket. 3 residues coordinate substrate: Arg-101, Asn-103, and Glu-121. Asn-154 and Asp-204 together coordinate a divalent metal cation. Asp-204 functions as the Proton donor/acceptor in the catalytic mechanism. Lys-244 and Lys-253 each carry N6-succinyllysine.

Belongs to the SMP-30/CGR1 family. Monomer. Zn(2+) is required as a cofactor. Mn(2+) serves as cofactor. Requires Ca(2+) as cofactor. The cofactor is Mg(2+).

The protein resides in the cytoplasm. It carries out the reaction D-glucono-1,5-lactone + H2O = D-gluconate + H(+). Its pathway is cofactor biosynthesis; L-ascorbate biosynthesis via UDP-alpha-D-glucuronate pathway; L-ascorbate from UDP-alpha-D-glucuronate: step 3/4. Functionally, gluconolactonase with low activity towards other sugar lactones, including gulonolactone and galactonolactone. Catalyzes a key step in ascorbic acid (vitamin C) biosynthesis. Can also hydrolyze diisopropyl phosphorofluoridate and phenylacetate (in vitro). Calcium-binding protein. Modulates Ca(2+) signaling, and Ca(2+)-dependent cellular processes and enzyme activities. The protein is Regucalcin (RGN) of Sus scrofa (Pig).